We begin with the raw amino-acid sequence, 168 residues long: Transcriptional repressor NrdR (168 aa).

A zinc finger spans residues 3 to 34; sequence CPFCQDAENKVIDSRESHEGSVIRRRRECLTC. Residues 49–139 enclose the ATP-cone domain; sequence PLIVKKDGRR…VYRSFRDIAE (91 aa).

It belongs to the NrdR family. Zn(2+) serves as cofactor.

Its function is as follows. Negatively regulates transcription of bacterial ribonucleotide reductase nrd genes and operons by binding to NrdR-boxes. The chain is Transcriptional repressor NrdR from Myxococcus xanthus (strain DK1622).